The sequence spans 782 residues: Homeotic protein proboscipedia (782 aa).

Disordered stretches follow at residues 1 to 23 (MQEVCSSLDTTSMGTQIKSESPL), 153 to 195 (PQTP…VPEN), 251 to 336 (MKHK…GISS), 358 to 380 (SSVSLDEDIEESSPIKVKKKDDG), 439 to 493 (IATP…QQQP), and 547 to 586 (YYNYNDTNGTPYLNHQQQHHHHAQHHQQQQHHQNHVADFE). Residues 164-169 (EYPWMK) carry the Antp-type hexapeptide motif. The segment at residues 198-257 (PRRLRTAYTNTQLLELEKEFHFNKYLCRPRRIEIAASLDLTERQVKVWFQNRRMKHKRQT) is a DNA-binding region (homeobox). Residues 308–321 (NNNTPSATNNNPSA) show a composition bias toward low complexity. A compositionally biased stretch (polar residues) spans 322–336 (GNLTPNSSLETGISS). The segment covering 452-463 (NGSGGGPAGGYF) has biased composition (gly residues). Residues 464–493 (PGYYPSPKQQQQVQQQQLHPQQQQLPQQQP) show a composition bias toward low complexity. Positions 563-580 (QQHHHHAQHHQQQQHHQN) are enriched in basic residues.

This sequence belongs to the Antp homeobox family. Proboscipedia subfamily.

Its subcellular location is the nucleus. In terms of biological role, sequence-specific transcription factor which is part of a developmental regulatory system that provides cells with specific positional identities on the anterior-posterior axis. Controls development of mouthparts, and labial and maxillary palps. The sequence is that of Homeotic protein proboscipedia (pb) from Drosophila melanogaster (Fruit fly).